The following is a 149-amino-acid chain: Macrodomain Ter protein (149 aa).

This sequence belongs to the MatP family. Homodimer.

Its subcellular location is the cytoplasm. Its function is as follows. Required for spatial organization of the terminus region of the chromosome (Ter macrodomain) during the cell cycle. Prevents early segregation of duplicated Ter macrodomains during cell division. Binds specifically to matS, which is a 13 bp signature motif repeated within the Ter macrodomain. In Vibrio cholerae serotype O1 (strain ATCC 39315 / El Tor Inaba N16961), this protein is Macrodomain Ter protein.